The primary structure comprises 309 residues: uncharacterized protein (309 aa).

The protein belongs to the anthranilate phosphoribosyltransferase family.

This is an uncharacterized protein from Aquifex aeolicus (strain VF5).